Here is a 153-residue protein sequence, read N- to C-terminus: Peptide deformylase (153 aa).

C87 and H129 together coordinate Fe cation. E130 is a catalytic residue. H133 serves as a coordination point for Fe cation.

The protein belongs to the polypeptide deformylase family. The cofactor is Fe(2+).

It carries out the reaction N-terminal N-formyl-L-methionyl-[peptide] + H2O = N-terminal L-methionyl-[peptide] + formate. Its function is as follows. Removes the formyl group from the N-terminal Met of newly synthesized proteins. Requires at least a dipeptide for an efficient rate of reaction. N-terminal L-methionine is a prerequisite for activity but the enzyme has broad specificity at other positions. The chain is Peptide deformylase from Dictyoglomus turgidum (strain DSM 6724 / Z-1310).